Consider the following 419-residue polypeptide: UDP-N-acetylglucosamine 1-carboxyvinyltransferase (419 aa).

A phosphoenolpyruvate-binding site is contributed by 22-23; sequence KN. Arg-91 contacts UDP-N-acetyl-alpha-D-glucosamine. Cys-115 serves as the catalytic Proton donor. Residue Cys-115 is modified to 2-(S-cysteinyl)pyruvic acid O-phosphothioketal. Residues 120–124, 160–163, Asp-305, and Val-327 contribute to the UDP-N-acetyl-alpha-D-glucosamine site; these read RPVDL and KVSV.

The protein belongs to the EPSP synthase family. MurA subfamily.

Its subcellular location is the cytoplasm. It carries out the reaction phosphoenolpyruvate + UDP-N-acetyl-alpha-D-glucosamine = UDP-N-acetyl-3-O-(1-carboxyvinyl)-alpha-D-glucosamine + phosphate. It participates in cell wall biogenesis; peptidoglycan biosynthesis. Cell wall formation. Adds enolpyruvyl to UDP-N-acetylglucosamine. This Shigella boydii serotype 18 (strain CDC 3083-94 / BS512) protein is UDP-N-acetylglucosamine 1-carboxyvinyltransferase.